Reading from the N-terminus, the 114-residue chain is Large ribosomal subunit protein bL19 (114 aa).

The protein belongs to the bacterial ribosomal protein bL19 family.

Functionally, this protein is located at the 30S-50S ribosomal subunit interface and may play a role in the structure and function of the aminoacyl-tRNA binding site. In Bacillus cereus (strain AH187), this protein is Large ribosomal subunit protein bL19.